Consider the following 467-residue polypeptide: UDP-N-acetylmuramate--L-alanine ligase (467 aa).

112 to 118 (GTHGKTT) lines the ATP pocket.

It belongs to the MurCDEF family.

It is found in the cytoplasm. The enzyme catalyses UDP-N-acetyl-alpha-D-muramate + L-alanine + ATP = UDP-N-acetyl-alpha-D-muramoyl-L-alanine + ADP + phosphate + H(+). It participates in cell wall biogenesis; peptidoglycan biosynthesis. In terms of biological role, cell wall formation. This Azoarcus sp. (strain BH72) protein is UDP-N-acetylmuramate--L-alanine ligase.